The chain runs to 296 residues: Phosphoribosylaminoimidazole-succinocarboxamide synthase (296 aa).

The protein belongs to the SAICAR synthetase family.

It catalyses the reaction 5-amino-1-(5-phospho-D-ribosyl)imidazole-4-carboxylate + L-aspartate + ATP = (2S)-2-[5-amino-1-(5-phospho-beta-D-ribosyl)imidazole-4-carboxamido]succinate + ADP + phosphate + 2 H(+). It functions in the pathway purine metabolism; IMP biosynthesis via de novo pathway; 5-amino-1-(5-phospho-D-ribosyl)imidazole-4-carboxamide from 5-amino-1-(5-phospho-D-ribosyl)imidazole-4-carboxylate: step 1/2. In Desulfotalea psychrophila (strain LSv54 / DSM 12343), this protein is Phosphoribosylaminoimidazole-succinocarboxamide synthase.